Consider the following 1086-residue polypeptide: MGSEDHSAQNPSCKIMTFRPTMDEFRDFNRYVAYIESQGAHRAGLAKIIPPKEWKPRQTYDDIDDVVIPAPIQQVVTGQSGLFTQYNIQKKAMTVGEYRRLANSEKYCTPRHQDFDDLERKYWKNLTFVSPIYGADISGSLYDDDVAQWNIGNLRTILDMVERECGTIIEGVNTPYLYFGMWKTTFAWHTEDMDLYSINYLHFGEPKSWYAIPPEHGKRLERLAIGFFPGSSQGCDAFLRHKMTLISPIILKKYGIPFSRITQEAGEFMITFPYGYHAGFNHGFNCAESTNFATLRWIDYGKVATQCTCRKDMVKISMDVFVRILQPERYEQWKQGRDLTVLDHTRPTALSSPELSSWSASRTSIKAKLLRRQISVKESRPWRKAEEERRREPTRRPGPASHRRRSQPKKSKPEESRSPGEATAGVSTLDEARGCSRGEAMPEDEEEEELLPSQGHEAEGVEEDGRGKPRPTKARNKKKTPSPSSPPLLSAPPALFPTEEVLRPPPQPKSPGPAMGPMAAEGGPPPTPLNVVPPGAPVEEAEVRPRPIIPMLYVLPRTSSTDGDREHSAHAQLAPMELGPEEENQAQAGDSQGTTPFSKLKVEIKKSRRHPLGRPPTRSPLSVVKQEASSDEEAFLFSGEDDVTDPEALRSLLSLQWKNKAASFQAERKFNAAAALSEPYCAICTLFYPYSQSVQTERDSAVQPPSKSGQRTRPLIPEMCFTSSGENTEPLPANSYVGEDGTSPLISCAHCCLQVHASCYGVRPELAKEGWTCSRCAAHAWTAECCLCNLRGGALQRTTEHRWIHVICAIAVPEVRFLNVIERNPVDVSAIPEQRWKLKCIYCRKRMKRVSGACIQCSYEHCSTSFHVTCAHAAGVLMEPDDWPYVVSITCLKHRASGAGGQLLRTVSLGQIVITKNRNGLYYRCRVIGTTAQTFYEVNFDDGSYSDNLYPESITSRDCLRLGPPPEGELVELRWTDGNLYRARFISMATSLIYQVEFEDGSQLTVKRGDIFTLEEELPKRVRSRLSLSTGTPQEPSFSGDDVKAAKRPRVASVLATTTEDTGRSPEYLSFMESLLQAQGRPGAPF.

In terms of domain architecture, JmjN spans 15–57; sequence IMTFRPTMDEFRDFNRYVAYIESQGAHRAGLAKIIPPKEWKPR. Y133 contacts 2-oxoglutarate. The JmjC domain maps to 146–309; sequence VAQWNIGNLR…YGKVATQCTC (164 aa). H189 and E191 together coordinate Fe cation. Residues N199 and K207 each coordinate 2-oxoglutarate. Residues C235 and H241 each coordinate Zn(2+). K242 lines the 2-oxoglutarate pocket. H277 provides a ligand contact to Fe cation. Positions 307 and 309 each coordinate Zn(2+). Positions 379 to 395 are enriched in basic and acidic residues; that stretch reads SRPWRKAEEERRREPTR. Disordered regions lie at residues 379-536 and 575-624; these read SRPW…PPGA and PMEL…LSVV. A compositionally biased stretch (basic residues) spans 401–410; sequence SHRRRSQPKK. Acidic residues predominate over residues 441-450; the sequence is MPEDEEEEEL. Basic and acidic residues predominate over residues 456 to 467; that stretch reads HEAEGVEEDGRG. Over residues 468–480 the composition is skewed to basic residues; that stretch reads KPRPTKARNKKKT. A compositionally biased stretch (low complexity) spans 512–522; that stretch reads GPAMGPMAAEG. Positions 585–597 are enriched in polar residues; the sequence is QAQAGDSQGTTPF. K599 bears the N6-acetyllysine mark. Residues 719–777 form a PHD-type 1 zinc finger; that stretch reads MCFTSSGENTEPLPANSYVGEDGTSPLISCAHCCLQVHASCYGVRPELAKEGWTCSRCA. A C2HC pre-PHD-type zinc finger spans residues 782-815; the sequence is TAECCLCNLRGGALQRTTEHRWIHVICAIAVPEV. The PHD-type 2 zinc-finger motif lies at 838-895; sequence LKCIYCRKRMKRVSGACIQCSYEHCSTSFHVTCAHAAGVLMEPDDWPYVVSITCLKHR. 2 consecutive Tudor domains span residues 905 to 962 and 963 to 1019; these read RTVS…CLRL and GPPP…EELP. Positions 1024-1043 are disordered; it reads SRLSLSTGTPQEPSFSGDDV. Polar residues predominate over residues 1026-1037; the sequence is LSLSTGTPQEPS.

It belongs to the JHDM3 histone demethylase family. Fe(2+) serves as cofactor.

It is found in the nucleus. It carries out the reaction N(6),N(6),N(6)-trimethyl-L-lysyl(9)-[histone H3] + 2 2-oxoglutarate + 2 O2 = N(6)-methyl-L-lysyl(9)-[histone H3] + 2 formaldehyde + 2 succinate + 2 CO2. Histone demethylase that specifically demethylates 'Lys-9' of histone H3, thereby playing a role in histone code. Does not demethylate histone H3 'Lys-4', H3 'Lys-27', H3 'Lys-36' nor H4 'Lys-20'. Only able to demethylate trimethylated H3 'Lys-9', with a weaker activity than KDM4A, KDM4C and KDM4D. Demethylation of Lys residue generates formaldehyde and succinate. Plays a critical role in the development of the central nervous system (CNS). The sequence is that of Lysine-specific demethylase 4B (Kdm4b) from Mus musculus (Mouse).